The sequence spans 114 residues: Hydrogenase maturation factor HypA (114 aa).

Histidine 2 provides a ligand contact to Ni(2+). Zn(2+) is bound by residues cysteine 73, cysteine 76, cysteine 89, and cysteine 92.

Belongs to the HypA/HybF family.

Its function is as follows. Involved in the maturation of [NiFe] hydrogenases. Required for nickel insertion into the metal center of the hydrogenase. The protein is Hydrogenase maturation factor HypA of Psychromonas ingrahamii (strain DSM 17664 / CCUG 51855 / 37).